We begin with the raw amino-acid sequence, 77 residues long: Conotoxin G11.1 (77 aa).

A signal peptide spans 1 to 20 (MKLFLAIVLILMLQFLSTGA). The propeptide occupies 21–45 (ETSDNHASRSTTALRDWLLGPKAKR). Cystine bridges form between cysteine 46–cysteine 60, cysteine 53–cysteine 65, cysteine 59–cysteine 69, and cysteine 64–cysteine 76.

Belongs to the conotoxin I3 superfamily. In terms of tissue distribution, expressed by the venom duct.

It localises to the secreted. Functionally, may embed in the membrane and bind to the voltage sensor domain of a ion channel. Does not induce paralysis when injected in fish, leading to the hypothesis that it may be part of the sedative nirvana cabal. The protein is Conotoxin G11.1 of Conus geographus (Geography cone).